The chain runs to 280 residues: Probable endonuclease 4 (280 aa).

The Zn(2+) site is built by histidine 69, histidine 109, glutamate 145, aspartate 179, histidine 182, histidine 216, aspartate 229, histidine 231, and glutamate 261.

It belongs to the AP endonuclease 2 family. Zn(2+) serves as cofactor.

It carries out the reaction Endonucleolytic cleavage to 5'-phosphooligonucleotide end-products.. Its function is as follows. Endonuclease IV plays a role in DNA repair. It cleaves phosphodiester bonds at apurinic or apyrimidinic (AP) sites, generating a 3'-hydroxyl group and a 5'-terminal sugar phosphate. The polypeptide is Probable endonuclease 4 (Aliarcobacter butzleri (strain RM4018) (Arcobacter butzleri)).